The sequence spans 429 residues: Argininosuccinate lyase (429 aa).

The protein belongs to the lyase 1 family. Argininosuccinate lyase subfamily.

Its subcellular location is the cytoplasm. It carries out the reaction 2-(N(omega)-L-arginino)succinate = fumarate + L-arginine. Its pathway is amino-acid biosynthesis; L-arginine biosynthesis; L-arginine from L-ornithine and carbamoyl phosphate: step 3/3. The polypeptide is Argininosuccinate lyase (Pyrobaculum aerophilum (strain ATCC 51768 / DSM 7523 / JCM 9630 / CIP 104966 / NBRC 100827 / IM2)).